Consider the following 166-residue polypeptide: Lipoprotein signal peptidase (166 aa).

The next 4 membrane-spanning stretches (helical) occupy residues Ala9–Leu29, Ala45–Leu65, Trp71–Leu91, and Phe100–Val120. Catalysis depends on residues Asp126 and Asp144. The chain crosses the membrane as a helical span at residues Trp135–Val155.

This sequence belongs to the peptidase A8 family.

It is found in the cell inner membrane. It catalyses the reaction Release of signal peptides from bacterial membrane prolipoproteins. Hydrolyzes -Xaa-Yaa-Zaa-|-(S,diacylglyceryl)Cys-, in which Xaa is hydrophobic (preferably Leu), and Yaa (Ala or Ser) and Zaa (Gly or Ala) have small, neutral side chains.. It participates in protein modification; lipoprotein biosynthesis (signal peptide cleavage). This protein specifically catalyzes the removal of signal peptides from prolipoproteins. This chain is Lipoprotein signal peptidase, found in Burkholderia ambifaria (strain ATCC BAA-244 / DSM 16087 / CCUG 44356 / LMG 19182 / AMMD) (Burkholderia cepacia (strain AMMD)).